We begin with the raw amino-acid sequence, 541 residues long: Sorting nexin-27 (541 aa).

A disordered region spans residues 1–42 (MADEDGEGIHPSAPHRNGGGGGGGGSGLHCAGNGGGGGGGPR). Gly residues predominate over residues 17 to 41 (NGGGGGGGGSGLHCAGNGGGGGGGP). The region spanning 43–136 (VVRIVKSESG…ELILTVLSVP (94 aa)) is the PDZ domain. Phosphoserine occurs at positions 51 and 62. Residues 161–269 (QAVPISVPRY…EFLSESDENY (109 aa)) form the PX domain. In terms of domain architecture, Ras-associating spans 273–362 (SDVELRVALP…TCLTIRKWLF (90 aa)). The tract at residues 273-362 (SDVELRVALP…TCLTIRKWLF (90 aa)) is FERM-like region F1. The FERM-like region F2 stretch occupies residues 373–421 (NDLAVTYFFHQAVDDVKKGYIKAEEKSYQLQKLYEQRKMVMYLNMLRTC). An FERM-like region F3 region spans residues 425–525 (NEIIFPHCAC…RVFCELKWRK (101 aa)).

Belongs to the sorting nexin family. Core component of the SNX27-retromer, a multiprotein complex composed of SNX27, the WASH complex and the retromer complex. Interacts (via PDZ domain) with a number of target transmembrane proteins (via PDZ-binding motif): ABCC4, ADRB2, ARHGEF7, GRIA1, GRIA2, GRIN1, GRIN2A GRIN2C, KCNJ6, KCNJ9 and SLC2A1/GLUT1. Interacts (via the FERM-like regions) with the WASH complex. Interacts with SNX1. Interacts with CYTIP. Isoform 1 and isoform 2 directly interact with DGKZ. Isoform 1 and isoform 2 interact with HT4R isoform 5-HTA(A). Interacts with MCC. Interacts (via PDZ domains) with SLC9A3; directs SLC9A3 membrane insertion from early endosomes to the plasma membrane. In terms of tissue distribution, widely expressed. Expressed in cells of hematopoietic origin (at protein level).

Its subcellular location is the early endosome membrane. It localises to the cytoplasm. It is found in the cytosol. Involved in the retrograde transport from endosome to plasma membrane, a trafficking pathway that promotes the recycling of internalized transmembrane proteins. Following internalization, endocytosed transmembrane proteins are delivered to early endosomes and recycled to the plasma membrane instead of being degraded in lysosomes. SNX27 specifically binds and directs sorting of a subset of transmembrane proteins containing a PDZ-binding motif at the C-terminus: following interaction with target transmembrane proteins, associates with the retromer complex, preventing entry into the lysosomal pathway, and promotes retromer-tubule based plasma membrane recycling. SNX27 also binds with the WASH complex. Interacts with membranes containing phosphatidylinositol-3-phosphate (PtdIns(3P)). May participate in establishment of natural killer cell polarity. Recruits CYTIP to early endosomes. The protein is Sorting nexin-27 (SNX27) of Homo sapiens (Human).